The sequence spans 195 residues: Interferon tau (195 aa).

An N-terminal signal peptide occupies residues 1–23 (MAFVLSLRMALVLVSYCPGGSLG). Cystine bridges form between C24-C122 and C52-C162. N-linked (GlcNAc...) asparagine glycosylation is present at N101.

Belongs to the alpha/beta interferon family. IFN-alphaII subfamily. In terms of tissue distribution, constitutively and exclusively expressed in the mononuclear cells of the extraembryonic trophectoderm.

The protein localises to the secreted. Paracrine hormone primarily responsible for maternal recognition of pregnancy. Interacts with endometrial receptors, probably type I interferon receptors, and blocks estrogen receptor expression, preventing the estrogen-induced increase in oxytocin receptor expression in the endometrium. This results in the suppression of the pulsatile endometrial release of the luteolytic hormone prostaglandin F2-alpha, hindering the regression of the corpus luteum (luteolysis) and therefore a return to ovarian cyclicity. This, and a possible direct effect of IFN-tau on prostaglandin synthesis, leads in turn to continued ovarian progesterone secretion, which stimulates the secretion by the endometrium of the nutrients required for the growth of the conceptus. In summary, displays particularly high antiviral and antiproliferative potency concurrently with particular weak cytotoxicity, high antiluteolytic activity and immunomodulatory properties. In contrast with other IFNs, IFN-tau is not virally inducible. The sequence is that of Interferon tau (IFNT) from Ovibos moschatus (Muskox).